A 473-amino-acid polypeptide reads, in one-letter code: Ornithine decarboxylase (473 aa).

Lysine 106 carries the N6-(pyridoxal phosphate)lysine modification. Residues serine 240, glycine 277, and 313 to 316 (EPGR) each bind pyridoxal 5'-phosphate. 367 to 368 (FD) is a binding site for substrate. The Proton donor; shared with dimeric partner role is filled by cysteine 417. Aspartate 418 serves as a coordination point for substrate. Pyridoxal 5'-phosphate is bound at residue tyrosine 447.

It belongs to the Orn/Lys/Arg decarboxylase class-II family. Homodimer. Only the dimer is catalytically active, as the active sites are constructed of residues from both monomers. It depends on pyridoxal 5'-phosphate as a cofactor.

Its subcellular location is the cytoplasm. The enzyme catalyses L-ornithine + H(+) = putrescine + CO2. It functions in the pathway amine and polyamine biosynthesis; putrescine biosynthesis via L-ornithine pathway; putrescine from L-ornithine: step 1/1. Its activity is regulated as follows. Inhibited by antizyme (AZ) OAZ1 in response to polyamine levels. AZ inhibits the assembly of the functional homodimer by binding to ODC monomers and targeting them for ubiquitin-independent proteolytic destruction by the 26S proteasome. Functionally, catalyzes the first and rate-limiting step of polyamine biosynthesis that converts ornithine into putrescine, which is the precursor for the polyamines, spermidine and spermine. Polyamines are essential for cell proliferation and are implicated in cellular processes, ranging from DNA replication to apoptosis. This chain is Ornithine decarboxylase (SPE1), found in Candida albicans (strain SC5314 / ATCC MYA-2876) (Yeast).